Consider the following 360-residue polypeptide: LVLLLSLAQLWSCHLVTAVPLLGYREHNCDDPEAEQVALLAVDHINNHLQQGYKHILNRIDKVKVWPRRPTGEVYELEIDTLETTCHALDPTPLANCSVRQVTQHAVEGDCDFHVLKQDGQFTVLSAKCDSTPDSAEDILKLCPDCPLLTPLNDTRVAQAAEAALTAFNEKNNGAYLQLVEIARAQLVPLPASTYVEFTVAATDCVAKEVTDPAKCNLLADKQYGFCKATVAEKVAREEVEVTCTIFPAQPVVPQPQPGVAGAAAVEPAPAVDPASPVSPPDGQSPSSLVVGPVLVAQAPAPPRAHYDLRQTFAGVPSMESGSGEAFHPGKVPVVVQPSVGAAPGPVITPCPGKVRYFKI.

The N-terminal stretch at 1-15 (LVLLLSLAQLWSCHL) is a signal peptide. Positions 24 to 130 (YREHNCDDPE…QFTVLSAKCD (107 aa)) constitute a Cystatin fetuin-A-type 1 domain. 6 disulfides stabilise this stretch: cysteine 29–cysteine 351, cysteine 86–cysteine 97, cysteine 111–cysteine 129, cysteine 143–cysteine 146, cysteine 205–cysteine 216, and cysteine 227–cysteine 244. N-linked (GlcNAc...) asparagine glycosylation is present at asparagine 96. A Phosphoserine modification is found at serine 131. Phosphothreonine is present on threonine 132. Serine 135 carries the phosphoserine modification. The Cystatin fetuin-A-type 2 domain occupies 141–252 (KLCPDCPLLT…TCTIFPAQPV (112 aa)). An N-linked (GlcNAc...) asparagine glycan is attached at asparagine 153. Residues 260 to 285 (VAGAAAVEPAPAVDPASPVSPPDGQS) form a disordered region. The residue at position 312 (threonine 312) is a Phosphothreonine. Serine 318, serine 321, and serine 323 each carry phosphoserine.

The protein belongs to the fetuin family. Post-translationally, phosphorylated by FAM20C in the extracellular medium. Bone marrow.

The protein resides in the secreted. Its function is as follows. A cell adhesion protein that binds immature cells of the granulocyte lineage. In Oryctolagus cuniculus (Rabbit), this protein is Alpha-2-HS-glycoprotein (AHSG).